The following is a 541-amino-acid chain: Chaperonin GroEL 2 (541 aa).

Residues 29 to 32 (TLGP), 86 to 90 (DGTTT), glycine 413, 477 to 479 (NAA), and aspartate 493 contribute to the ATP site.

It belongs to the chaperonin (HSP60) family. In terms of assembly, forms a cylinder of 14 subunits composed of two heptameric rings stacked back-to-back. Interacts with the co-chaperonin GroES.

The protein resides in the cytoplasm. The catalysed reaction is ATP + H2O + a folded polypeptide = ADP + phosphate + an unfolded polypeptide.. In terms of biological role, together with its co-chaperonin GroES, plays an essential role in assisting protein folding. The GroEL-GroES system forms a nano-cage that allows encapsulation of the non-native substrate proteins and provides a physical environment optimized to promote and accelerate protein folding. This is Chaperonin GroEL 2 from Nocardioides sp. (strain ATCC BAA-499 / JS614).